Here is a 353-residue protein sequence, read N- to C-terminus: 3-deoxy-D-manno-octulosonic acid transferase (353 aa).

Catalysis depends on Glu-31, which acts as the Proton acceptor. CMP is bound by residues 211 to 212, 247 to 249, and 273 to 276; these read PR, FGI, and NLLE.

This sequence belongs to the glycosyltransferase group 1 family. Glycosyltransferase 30 subfamily. In terms of assembly, can form homodimer, homotrimer and homotetramer.

It is found in the cell inner membrane. The enzyme catalyses lipid IVA (E. coli) + CMP-3-deoxy-beta-D-manno-octulosonate = alpha-Kdo-(2-&gt;6)-lipid IVA (E. coli) + CMP + H(+). The protein operates within bacterial outer membrane biogenesis; LPS core biosynthesis. In terms of biological role, involved in lipopolysaccharide (LPS) biosynthesis. Catalyzes the transfer of a single 3-deoxy-D-manno-octulosonate (Kdo) residue from CMP-Kdo to lipid IV(A), the tetraacyldisaccharide-1,4'-bisphosphate precursor of lipid A. Is strictly monofunctional, i.e. is capable of adding only a single Kdo residue to the acceptor lipid. This is 3-deoxy-D-manno-octulosonic acid transferase (kdtA) from Aquifex aeolicus (strain VF5).